Here is a 247-residue protein sequence, read N- to C-terminus: tRNA uridine(34) hydroxylase (247 aa).

Residues 124–218 (TQQDVIVIDT…YLEDTQNKNN (95 aa)) form the Rhodanese domain. Cys178 acts as the Cysteine persulfide intermediate in catalysis.

It belongs to the TrhO family.

It catalyses the reaction uridine(34) in tRNA + AH2 + O2 = 5-hydroxyuridine(34) in tRNA + A + H2O. Catalyzes oxygen-dependent 5-hydroxyuridine (ho5U) modification at position 34 in tRNAs. The sequence is that of tRNA uridine(34) hydroxylase from Rickettsia conorii (strain ATCC VR-613 / Malish 7).